A 113-amino-acid chain; its full sequence is Insulin (113 aa).

The N-terminal stretch at 1-24 is a signal peptide; the sequence is MAALWLQAFSLLVLMMVSWPGSQA. Disulfide bonds link Cys-32–Cys-99, Cys-44–Cys-112, and Cys-98–Cys-103. The propeptide at 56–90 is c peptide; it reads DVDPLLGFLPPKAGGAVVQGGENEVTFKDQMEMMV.

The protein belongs to the insulin family. In terms of assembly, heterodimer of a B chain and an A chain linked by two disulfide bonds.

Its subcellular location is the secreted. Functionally, insulin decreases blood glucose concentration. It increases cell permeability to monosaccharides, amino acids and fatty acids. It accelerates glycolysis, the pentose phosphate cycle, and glycogen synthesis in liver. The polypeptide is Insulin (ins) (Oreochromis niloticus (Nile tilapia)).